We begin with the raw amino-acid sequence, 72 residues long: Lantibiotic lichenicidin VK21 A2 (72 aa).

The interval 1-21 (MKTMKNSAAREAFKGANHPAG) is disordered. The propeptide occupies 1 to 40 (MKTMKNSAAREAFKGANHPAGMVSEEELKALVGGNDVNPE). Threonine 41 carries the 2-oxobutanoic acid modification. Threonine 42, threonine 45, and threonine 46 each carry (Z)-2,3-didehydrobutyrine. Residues 47–51 (SSWTC) constitute a cross-link (lanthionine (Ser-Cys)). Serine 48 is modified (2,3-didehydroalanine (Ser)). (Z)-2,3-didehydrobutyrine occurs at positions 53 and 57. The lanthionine (Ser-Cys) cross-link spans 59–63 (SASLC). 2 cross-links (beta-methyllanthionine (Thr-Cys)) span residues 65-68 (TTKC) and 69-72 (TSRC). (Z)-2,3-didehydrobutyrine is present on threonine 66.

Maturation of lantibiotics involves the enzymatic conversion of Thr, and Ser into dehydrated AA and the formation of thioether bonds with cysteine. This is followed by membrane translocation and cleavage of the modified precursor. Post-translationally, the 2,3-didehydrobutyrines are determined to be the Z-isomers.

It is found in the secreted. Functionally, lanthionine-containing peptide antibiotic (lantibiotic) active on Gram-positive bacteria. The bactericidal activity of lantibiotics is based on depolarization of energized bacterial cytoplasmic membranes, initiated by the formation of aqueous transmembrane pores. When present individually, LchA2 exhibits activity towards B.subtilis L1 (IC(50)=30 uM), Rhodococcus sp. SS2 (IC(50)=16.6 uM), M.luteus B1314 (IC(50)=2.6 uM), B.megaterium VKM41 (IC(50)=2 uM), S.aureus 209p (IC(50)=20 uM), B.pumilus 2001, B.globigii I, B.amyloliquefaciens I, M.smegmatis 1171 and M.phlei 1291. However, when combined with LchA1, it displays much stronger activity against B.subtilis L1 (IC(50)=0.64 uM), Rhodococcus sp. SS2 (IC(50)=0.64 uM), M.luteus B1314 (IC(50)=0.09 uM), B.megaterium VKM41 (IC(50)=0.12 uM) and S.aureus 209p (IC(50)=0.64 uM). The activity of the combined LchA1 and LchA2 peptides is strongest at a molar ratio of 1. Even when applied at 17-fold concentration of the highest IC(50) values for Gram-positive bacteria, neither the individual nor the combined peptides display activity against Gram-negative bacteria P.aeruginosa PAO1, P.putida I-97 or E.coli C600. This chain is Lantibiotic lichenicidin VK21 A2, found in Bacillus licheniformis.